Reading from the N-terminus, the 119-residue chain is Large ribosomal subunit protein bL20 (119 aa).

This sequence belongs to the bacterial ribosomal protein bL20 family.

In terms of biological role, binds directly to 23S ribosomal RNA and is necessary for the in vitro assembly process of the 50S ribosomal subunit. It is not involved in the protein synthesizing functions of that subunit. The sequence is that of Large ribosomal subunit protein bL20 from Treponema denticola (strain ATCC 35405 / DSM 14222 / CIP 103919 / JCM 8153 / KCTC 15104).